We begin with the raw amino-acid sequence, 145 residues long: Ribosome maturation factor RimP (145 aa).

It belongs to the RimP family.

It localises to the cytoplasm. Its function is as follows. Required for maturation of 30S ribosomal subunits. This Borreliella burgdorferi (strain ATCC 35210 / DSM 4680 / CIP 102532 / B31) (Borrelia burgdorferi) protein is Ribosome maturation factor RimP.